Consider the following 282-residue polypeptide: NADPH-dependent 7-cyano-7-deazaguanine reductase (282 aa).

A substrate-binding site is contributed by 88 to 90 (IES). NADPH is bound at residue 90–91 (SK). C190 functions as the Thioimide intermediate in the catalytic mechanism. Catalysis depends on D197, which acts as the Proton donor. Position 229–230 (229–230 (HE)) interacts with substrate. 258–259 (RG) contributes to the NADPH binding site.

It belongs to the GTP cyclohydrolase I family. QueF type 2 subfamily. As to quaternary structure, homodimer.

The protein localises to the cytoplasm. It catalyses the reaction 7-aminomethyl-7-carbaguanine + 2 NADP(+) = 7-cyano-7-deazaguanine + 2 NADPH + 3 H(+). Its pathway is tRNA modification; tRNA-queuosine biosynthesis. Its function is as follows. Catalyzes the NADPH-dependent reduction of 7-cyano-7-deazaguanine (preQ0) to 7-aminomethyl-7-deazaguanine (preQ1). The protein is NADPH-dependent 7-cyano-7-deazaguanine reductase of Escherichia coli O45:K1 (strain S88 / ExPEC).